The chain runs to 306 residues: Latrophilin receptor-like protein A (306 aa).

Residues 1-15 (MPSQLLNTVLSYLTD) are Extracellular-facing. The helical transmembrane segment at 16-36 (ILLSLSIVGSFLTIFTFMLYP) threads the bilayer. Topologically, residues 37-41 (KLRSY) are cytoplasmic. A helical membrane pass occupies residues 42–62 (PIKLIIYLCMSIVFSLFFFEI). Topologically, residues 63 to 70 (SFRSSNSL) are extracellular. A helical membrane pass occupies residues 71–91 (FCIPAAILVHYFFLANFFWTF). The Cytoplasmic segment spans residues 92–113 (SVSFNFFQMIVKRNRDSEFYER). The helical transmembrane segment at 114-134 (YYHLISWGIPFIIIIFCAAFK) threads the bilayer. Residues 135–152 (KYVDRGGFCYLEDQYSVY) lie on the Extracellular side of the membrane. Residues 153–173 (FGFFMPGVIIVCSNICIYVFV) form a helical membrane-spanning segment. Over 174–196 (AKEIYKTLRHTPTQKRQTVKEFR) the chain is Cytoplasmic. The chain crosses the membrane as a helical span at residues 197–217 (VYFSIFVSIGSSWIFGFIYMF). The Extracellular portion of the chain corresponds to 218 to 222 (SDSNS). Residues 223–243 (IIGYIFLILFSISTSLQGFFI) traverse the membrane as a helical segment. Over 244–306 (FISYCLNYKV…TTTTTNVYSA (63 aa)) the chain is Cytoplasmic. The disordered stretch occupies residues 279-306 (TTQSGPTGTTDSSSTMTSTTTTTNVYSA).

This sequence belongs to the G-protein coupled receptor 2 family. LN-TM7 subfamily.

The protein localises to the membrane. This Dictyostelium discoideum (Social amoeba) protein is Latrophilin receptor-like protein A (lrlA).